A 342-amino-acid polypeptide reads, in one-letter code: MAIDENKQKALAAALGQIEKQFGKGSIMRLGEDRSMNVETISTGSLSLDVALGAGGLPRGRIVEIYGPESYGKTTLTLQVIAAAQREGKICAFIDAEHALDPIYAQKLGVDIDNLLCSQPDTGEQALEICDALSRSGAVDVIVVDSVAALTPKAEIEGEIGDSHVGLAARMMSQAMRKLAGNLKNSNTLLIFINQIRMKIGVMFGNPETTTGGNALKFYASVRLDIRRIGSVKNGDEVVGSETRVKVVKNKIAAPFKQAEFQIMYGEGINTFGELIDLGVKHKLVEKAGAWYSYNGEKIGQGKANATTYLKEHPEMYNELNTKLREMLLNHAGEFTSARDFC.

The protein belongs to the RecA family.

The protein localises to the cytoplasm. Its function is as follows. Can catalyze the hydrolysis of ATP in the presence of single-stranded DNA, the ATP-dependent uptake of single-stranded DNA by duplex DNA, and the ATP-dependent hybridization of homologous single-stranded DNAs. It interacts with LexA causing its activation and leading to its autocatalytic cleavage. The chain is Protein RecA from Pectobacterium carotovorum (Erwinia carotovora).